The sequence spans 183 residues: UPF0316 protein EF_1609 (183 aa).

3 helical membrane-spanning segments follow: residues 1–21 (MVVD…YITL), 35–55 (VIAP…LSMV), and 62–82 (PLNL…GIKI).

The protein belongs to the UPF0316 family.

Its subcellular location is the cell membrane. The chain is UPF0316 protein EF_1609 from Enterococcus faecalis (strain ATCC 700802 / V583).